Reading from the N-terminus, the 404-residue chain is Nuclear receptor subfamily 2 group F member 6 (404 aa).

A compositionally biased stretch (gly residues) spans 1–15; sequence MAMVTGGWGGPGGDT. A disordered region spans residues 1-49; sequence MAMVTGGWGGPGGDTNGVDKAGGYPRAAEDDSASPPGAASDAEPGDEER. Residues 33-42 are compositionally biased toward low complexity; the sequence is ASPPGAASDA. Phosphoserine is present on residues Ser34 and Ser40. The segment at residues 53–128 is a DNA-binding region (nuclear receptor); the sequence is QVDCVVCGDK…VGMRKEAVQR (76 aa). The segment at 56–76 adopts an NR C4-type zinc-finger fold; sequence CVVCGDKSSGKHYGVFTCEGC. Ser83 carries the phosphoserine modification. The segment at 92–116 adopts an NR C4-type zinc-finger fold; the sequence is CRSNRDCQIDQHHRNQCQYCRLKKC. The 229-residue stretch at 165-393 folds into the NR LBD domain; the sequence is PVSELIAQLL…TLIRDMLLSG (229 aa). Residues 327-404 form an important for dimerization region; it reads LQEKAQVALT…TFNWPYGSGQ (78 aa).

This sequence belongs to the nuclear hormone receptor family. NR2 subfamily. In terms of assembly, binds DNA as dimer; homodimer and heterodimer with NR2F2 and probably NR2F1. Interacts with THRB. As to expression, expressed in heart, placenta, liver, skeletal muscle, kidney and pancreas.

It is found in the nucleus. Functionally, transcription factor predominantly involved in transcriptional repression. Binds to promoter/enhancer response elements that contain the imperfect 5'-AGGTCA-3' direct or inverted repeats with various spacings which are also recognized by other nuclear hormone receptors. Involved in modulation of hormonal responses. Represses transcriptional activity of the lutropin-choriogonadotropic hormone receptor/LHCGR gene, the renin/REN gene and the oxytocin-neurophysin/OXT gene. Represses the triiodothyronine-dependent and -independent transcriptional activity of the thyroid hormone receptor gene in a cell type-specific manner. The corepressing function towards thyroid hormone receptor beta/THRB involves at least in part the inhibition of THRB binding to triiodothyronine response elements (TREs) by NR2F6. Inhibits NFATC transcription factor DNA binding and subsequently its transcriptional activity. Acts as transcriptional repressor of IL-17 expression in Th-17 differentiated CD4(+) T cells and may be involved in induction and/or maintenance of peripheral immunological tolerance and autoimmunity. Involved in development of forebrain circadian clock; is required early in the development of the locus coeruleus (LC). The polypeptide is Nuclear receptor subfamily 2 group F member 6 (NR2F6) (Homo sapiens (Human)).